The primary structure comprises 255 residues: MNTARLNQGTPLLLNAVSKHYAENIVLNQLDLHIPAGQFVAVVGRSGGGKSTLLRLLAGLETPTAGDVLAGTTPLAEIQDDTRMMFQDARLLPWKSVIDNVGLGLKGQWRDAARQALAAVGLENRAGEWPAALSGGQKQRVALARALIHRPGLLLLDEPLGALDALTRLEMQDLIVSLWLKHGFTVLLVTHDVSEAVAMADRVLLIEEGKIGLDLTVDIPRPRRLGSVRLAELEAEVLQRVMQRGHSEQPIRRHG.

In terms of domain architecture, ABC transporter spans 12 to 233 (LLLNAVSKHY…RLGSVRLAEL (222 aa)). Position 44-51 (44-51 (GRSGGGKS)) interacts with ATP.

The protein belongs to the ABC transporter superfamily. Aliphatic sulfonates importer (TC 3.A.1.17.2) family. The complex is composed of two ATP-binding proteins (SsuB), two transmembrane proteins (SsuC) and a solute-binding protein (SsuA).

It localises to the cell inner membrane. It catalyses the reaction ATP + H2O + aliphatic sulfonate-[sulfonate-binding protein]Side 1 = ADP + phosphate + aliphatic sulfonateSide 2 + [sulfonate-binding protein]Side 1.. Part of the ABC transporter complex SsuABC involved in aliphatic sulfonates import. Responsible for energy coupling to the transport system. In Escherichia coli O6:H1 (strain CFT073 / ATCC 700928 / UPEC), this protein is Aliphatic sulfonates import ATP-binding protein SsuB.